The sequence spans 222 residues: 7-cyano-7-deazaguanine synthase (222 aa).

11–21 (FSGGQDSTTCL) provides a ligand contact to ATP. Zn(2+)-binding residues include Cys-187, Cys-195, Cys-198, and Cys-201.

This sequence belongs to the QueC family. Requires Zn(2+) as cofactor.

It carries out the reaction 7-carboxy-7-deazaguanine + NH4(+) + ATP = 7-cyano-7-deazaguanine + ADP + phosphate + H2O + H(+). The protein operates within purine metabolism; 7-cyano-7-deazaguanine biosynthesis. In terms of biological role, catalyzes the ATP-dependent conversion of 7-carboxy-7-deazaguanine (CDG) to 7-cyano-7-deazaguanine (preQ(0)). The protein is 7-cyano-7-deazaguanine synthase of Actinobacillus pleuropneumoniae serotype 3 (strain JL03).